We begin with the raw amino-acid sequence, 435 residues long: Tol-Pal system protein TolB (435 aa).

The first 28 residues, 1–28, serve as a signal peptide directing secretion; sequence MVKCSLIRALMVIAGLIGAAAFTTPANA. Positions 288–310 are disordered; that stretch reads STAAIDTSPSYSPDGARVSFESD.

The protein belongs to the TolB family. In terms of assembly, the Tol-Pal system is composed of five core proteins: the inner membrane proteins TolA, TolQ and TolR, the periplasmic protein TolB and the outer membrane protein Pal. They form a network linking the inner and outer membranes and the peptidoglycan layer.

It is found in the periplasm. In terms of biological role, part of the Tol-Pal system, which plays a role in outer membrane invagination during cell division and is important for maintaining outer membrane integrity. The chain is Tol-Pal system protein TolB from Rhizobium leguminosarum bv. trifolii (strain WSM2304).